The sequence spans 1320 residues: Sal-like protein 3 (1320 aa).

Basic residues predominate over residues methionine 1–histidine 11. A disordered region spans residues methionine 1 to glutamate 49. Residues glycine 40 to glutamate 49 are compositionally biased toward low complexity. The C2H2-type 1; atypical zinc finger occupies serine 51–cysteine 73. Disordered stretches follow at residues aspartate 84–methionine 166 and leucine 271–asparagine 367. Pro residues predominate over residues alanine 88–alanine 100. Phosphoserine is present on serine 109. The span at serine 121–glutamate 131 shows a compositional bias: basic and acidic residues. The span at proline 143–glutamate 160 shows a compositional bias: pro residues. Over residues leucine 271–alanine 289 the composition is skewed to low complexity. Residues histidine 295–alanine 311 are compositionally biased toward polar residues. Low complexity-rich tracts occupy residues serine 323–valine 342 and proline 355–asparagine 367. C2H2-type zinc fingers lie at residues histidine 427–histidine 449 and phenylalanine 455–histidine 477. Positions glycine 534–glycine 623 are disordered. The span at glycine 543–threonine 554 shows a compositional bias: polar residues. Residues proline 555–serine 568 are compositionally biased toward low complexity. The segment covering glutamate 569–glycine 583 has biased composition (polar residues). C2H2-type zinc fingers lie at residues asparagine 692–histidine 714, phenylalanine 720–histidine 742, and histidine 752–histidine 774. 2 disordered regions span residues serine 807–proline 846 and valine 878–glycine 972. A compositionally biased stretch (acidic residues) spans phenylalanine 809–glutamate 823. Composition is skewed to low complexity over residues proline 834–proline 846 and arginine 902–serine 923. Serine 932 bears the Phosphoserine mark. 4 consecutive C2H2-type zinc fingers follow at residues threonine 997–histidine 1019, phenylalanine 1025–histidine 1047, histidine 1133–histidine 1155, and phenylalanine 1161–histidine 1183. The residue at position 1197 (serine 1197) is a Phosphoserine.

Belongs to the sal C2H2-type zinc-finger protein family. In terms of tissue distribution, in adult brain, testis and kidney. In lower levels also in adult ovaries and embryonic stem cells. In embryo in developing neuroectoderm of brain, inner ear and spinal cord. Also weakly and transiently expressed in embryonic branchial arches, notochord, limb buds and heart.

The protein resides in the nucleus. Functionally, probable transcription factor. This Mus musculus (Mouse) protein is Sal-like protein 3 (Sall3).